Reading from the N-terminus, the 310-residue chain is Epoxyqueuosine reductase (310 aa).

The active-site Proton donor is the aspartate 133. In terms of domain architecture, 4Fe-4S ferredoxin-type spans 179 to 208 (YDNPSDKDYCGTCTRCVDACPTDAILQDNL). [4Fe-4S] cluster-binding residues include cysteine 188, cysteine 191, cysteine 194, cysteine 198, cysteine 214, cysteine 241, cysteine 244, and cysteine 248.

This sequence belongs to the QueG family. In terms of assembly, monomer. Cob(II)alamin is required as a cofactor. The cofactor is [4Fe-4S] cluster.

It is found in the cytoplasm. It catalyses the reaction epoxyqueuosine(34) in tRNA + AH2 = queuosine(34) in tRNA + A + H2O. It functions in the pathway tRNA modification; tRNA-queuosine biosynthesis. Its function is as follows. Catalyzes the conversion of epoxyqueuosine (oQ) to queuosine (Q), which is a hypermodified base found in the wobble positions of tRNA(Asp), tRNA(Asn), tRNA(His) and tRNA(Tyr). The protein is Epoxyqueuosine reductase of Cyclobacterium marinum (strain ATCC 25205 / DSM 745 / LMG 13164 / NCIMB 1802) (Flectobacillus marinus).